The sequence spans 492 residues: Excitatory amino acid transporter (492 aa).

The Cytoplasmic portion of the chain corresponds to 1–7 (MVSWIRK). A run of 3 helical transmembrane segments spans residues 8–28 (NLLLVLTVSSVVLGALCGFLL), 47–67 (LLMHMLKMMILPLIMSSLISG), and 85–105 (TYYMFTTAVAVVTGIFLVLVI). Residues 106-191 (HPGDPTIKKE…VKASVEYTSG (86 aa)) lie on the Extracellular side of the membrane. Residues Asn-166 and Asn-176 are each glycosylated (N-linked (GlcNAc...) asparagine). 5 helical membrane-spanning segments follow: residues 192-212 (MNVLGVIVFCIAIGISLSQLG), 228-248 (VIMKLVMTVMWYSPFGILCLI), 270-290 (VTVLSGLAIHSLISLPLIFFV), 358-378 (AVAAIFIAQINGVHLSFGQVV), and 389-409 (IGAASVPSAGLVTMLLVLTAV).

This sequence belongs to the dicarboxylate/amino acid:cation symporter (DAACS) (TC 2.A.23) family.

It localises to the membrane. Its function is as follows. Transports L-glutamate and also L- and D-aspartate. Essential for terminating the postsynaptic action of glutamate by rapidly removing released glutamate from the synaptic cleft. Acts as a symport by cotransporting sodium. This Onchocerca volvulus protein is Excitatory amino acid transporter (GLT-1).